Reading from the N-terminus, the 241-residue chain is Cell division cycle-associated protein 4 (241 aa).

The SERTA domain occupies 30 to 77 (YSLQRQSLLDMSLVKLQLCHMLVEPNLCRSVLIANTVRQIQEEMTQDG).

As to expression, highest levels of expression in the pancreas, thymus, testis, spleen, liver, placenta and leukocytes. Relatively low levels in the lung, kidney, prostate, ovary, small intestine and colon. Hardly detectable, if at all, in the brain, skeletal muscle and heart.

Its subcellular location is the nucleus. Its function is as follows. May participate in the regulation of cell proliferation through the E2F/RB pathway. May be involved in molecular regulation of hematopoietic stem cells and progenitor cell lineage commitment and differentiation. The protein is Cell division cycle-associated protein 4 (CDCA4) of Homo sapiens (Human).